A 540-amino-acid polypeptide reads, in one-letter code: 2,3-bisphosphoglycerate-independent phosphoglycerate mutase (540 aa).

The Mn(2+) site is built by Asp24 and Ser74. The active-site Phosphoserine intermediate is the Ser74. Substrate contacts are provided by residues His135, 165-166 (RD), Arg197, Arg203, 268-271 (RPDR), and Lys341. Positions 408, 412, 449, 450, and 467 each coordinate Mn(2+).

Belongs to the BPG-independent phosphoglycerate mutase family. As to quaternary structure, monomer. Mn(2+) serves as cofactor.

The enzyme catalyses (2R)-2-phosphoglycerate = (2R)-3-phosphoglycerate. Its pathway is carbohydrate degradation; glycolysis; pyruvate from D-glyceraldehyde 3-phosphate: step 3/5. Catalyzes the interconversion of 2-phosphoglycerate and 3-phosphoglycerate. The polypeptide is 2,3-bisphosphoglycerate-independent phosphoglycerate mutase (Prochlorococcus marinus (strain SARG / CCMP1375 / SS120)).